We begin with the raw amino-acid sequence, 519 residues long: Chaperone SurA (519 aa).

Positions 1–31 are cleaved as a signal peptide; that stretch reads MMRSLHSLRRMSGTVLALMLAAGLPLSAAQA. Composition is skewed to low complexity over residues 31 to 45 and 197 to 207; these read AQPA…QKPA and PAAAQATRAPA. 2 disordered regions span residues 31–50 and 196–221; these read AQPA…PAPS and NPAA…PAQS. The PpiC 1 domain occupies 223-324; that stretch reads PAMLVLAQIL…NGFHILKVVD (102 aa). A disordered region spans residues 328 to 361; sequence GGQPAQAARPAPAPAPQQPSSFQEGPSVAAPQGP. Residues 364-463 enclose the PpiC 2 domain; that stretch reads VTQTHARHIL…FGWHLIQVLE (100 aa).

The protein localises to the periplasm. It carries out the reaction [protein]-peptidylproline (omega=180) = [protein]-peptidylproline (omega=0). Chaperone involved in the correct folding and assembly of outer membrane proteins. Recognizes specific patterns of aromatic residues and the orientation of their side chains, which are found more frequently in integral outer membrane proteins. May act in both early periplasmic and late outer membrane-associated steps of protein maturation. This Bordetella parapertussis (strain 12822 / ATCC BAA-587 / NCTC 13253) protein is Chaperone SurA.